We begin with the raw amino-acid sequence, 254 residues long: DNA repair protein RecO (254 aa).

Belongs to the RecO family.

Functionally, involved in DNA repair and RecF pathway recombination. This chain is DNA repair protein RecO, found in Gluconacetobacter diazotrophicus (strain ATCC 49037 / DSM 5601 / CCUG 37298 / CIP 103539 / LMG 7603 / PAl5).